The chain runs to 96 residues: U-stichotoxin-Hau2b (96 aa).

Positions 1-18 are cleaved as a signal peptide; it reads MKPIFIVALLFSTCLVNA. Propeptides lie at residues 19–29 and 30–33; these read KPSIDDAEMKR and EPKP. 2 cysteine pairs are disulfide-bonded: cysteine 40–cysteine 51 and cysteine 43–cysteine 58. 2 consecutive propeptides follow at residues 62-64 and 65-68; these read RKR and EPKP. 2 cysteine pairs are disulfide-bonded: cysteine 75/cysteine 86 and cysteine 78/cysteine 93.

This sequence belongs to the sea anemone BBH family.

It is found in the secreted. Its subcellular location is the nematocyst. In terms of biological role, neurotoxin that paralyzes freshwater crabs at high concentration. This is U-stichotoxin-Hau2b from Heteractis aurora (Banded sea anemone).